Consider the following 242-residue polypeptide: Biosynthetic peptidoglycan transglycosylase (242 aa).

The helical transmembrane segment at 19–39 (LMVVLAVFWGGGIALFSVAPV) threads the bilayer.

This sequence belongs to the glycosyltransferase 51 family.

It localises to the cell inner membrane. The catalysed reaction is [GlcNAc-(1-&gt;4)-Mur2Ac(oyl-L-Ala-gamma-D-Glu-L-Lys-D-Ala-D-Ala)](n)-di-trans,octa-cis-undecaprenyl diphosphate + beta-D-GlcNAc-(1-&gt;4)-Mur2Ac(oyl-L-Ala-gamma-D-Glu-L-Lys-D-Ala-D-Ala)-di-trans,octa-cis-undecaprenyl diphosphate = [GlcNAc-(1-&gt;4)-Mur2Ac(oyl-L-Ala-gamma-D-Glu-L-Lys-D-Ala-D-Ala)](n+1)-di-trans,octa-cis-undecaprenyl diphosphate + di-trans,octa-cis-undecaprenyl diphosphate + H(+). The protein operates within cell wall biogenesis; peptidoglycan biosynthesis. Peptidoglycan polymerase that catalyzes glycan chain elongation from lipid-linked precursors. The chain is Biosynthetic peptidoglycan transglycosylase from Escherichia coli (strain ATCC 8739 / DSM 1576 / NBRC 3972 / NCIMB 8545 / WDCM 00012 / Crooks).